We begin with the raw amino-acid sequence, 402 residues long: uncharacterized protein (402 aa).

12 consecutive transmembrane segments (helical) span residues 23–43, 52–72, 90–110, 121–141, 158–178, 180–200, 228–248, 255–275, 282–302, 309–329, 351–371, and 375–395; these read IVSV…PLAV, LGYG…ATLL, VLYG…SVAI, LLVG…AAIG, WNGI…VLLV, WLGL…GFAL, GMGL…ITLY, ANAV…RLLF, LGGF…LLLL, WVGL…FPAF, LFVD…ANLF, and SMFL…IALH.

It belongs to the major facilitator superfamily. YhhS family.

It is found in the cell inner membrane. This is an uncharacterized protein from Pseudomonas aeruginosa (strain UCBPP-PA14).